Here is a 270-residue protein sequence, read N- to C-terminus: Transcriptional regulator BrlR (270 aa).

A 3',3'-c-di-GMP-binding site is contributed by methionine 1. The HTH merR-type domain occupies 1–71 (MLTIGQLARI…LEAIDRLKRD (71 aa)). The H-T-H motif DNA-binding region spans 4–23 (IGQLARIFEISTKTLRHYDA). Positions 31, 34, 35, 40, 67, 70, 86, and 270 each coordinate 3',3'-c-di-GMP. An involved in effector-binding, probably including pyocyanine-binding region spans residues 120 to 270 (MHARIVERPA…SQVDLYIPIY (151 aa)).

In terms of assembly, monomer. Homodimer; dimer formation enhanced in the presence of the second messenger, cyclic di-GMP (c-di-GMP). Homotetramer; dimer of dimers, arranged in a head-to-tail fashion, which may reduce DNA-binding ability. Conformational changes upon binding c-di-GMP or pyocyanine may facilitate DNA binding.

Functionally, transcriptional regulator. Responsive to the second messenger cyclic di-GMP (c-di-GMP) and to the virulence factor pyocyanine, which both enhance gene expression and promoter DNA binding of BrlR. Activates expression of operons encoding the multidrug efflux pumps MexAB-OprM and MexEF-OprN and several ABC transport systems, acting by direct binding to their respective promoters. Also acts as a repressor of the two component regulatory system, PhoPQ. Binds to promoter of its own gene. Contributes to the antimicrobial tolerance exhibited by biofilms, acting, at least in part, by activating expression of multidrug efflux pumps and ABC transporters. The protein is Transcriptional regulator BrlR of Pseudomonas aeruginosa (strain ATCC 15692 / DSM 22644 / CIP 104116 / JCM 14847 / LMG 12228 / 1C / PRS 101 / PAO1).